We begin with the raw amino-acid sequence, 383 residues long: Protein pelota homolog (383 aa).

It belongs to the eukaryotic release factor 1 family. Pelota subfamily. In terms of assembly, component of the Pelota-HBS1L complex, also named Dom34-Hbs1 complex, composed of PELO and HBS1L. It depends on a divalent metal cation as a cofactor.

The protein localises to the cytoplasm. Functionally, component of the Pelota-HBS1L complex, a complex that recognizes stalled ribosomes and triggers the No-Go Decay (NGD) pathway. In the Pelota-HBS1L complex, PELO recognizes ribosomes stalled at the 3' end of an mRNA and engages stalled ribosomes by destabilizing mRNA in the mRNA channel. Following mRNA extraction from stalled ribosomes by the SKI complex, the Pelota-HBS1L complex promotes recruitment of ABCE1, which drives the disassembly of stalled ribosomes, followed by degradation of damaged mRNAs as part of the NGD pathway. This is Protein pelota homolog (pelo) from Xenopus laevis (African clawed frog).